The chain runs to 876 residues: ATPase WRNIP1 (876 aa).

2 stretches are compositionally biased toward low complexity: residues 56 to 85 (NKSN…TPTK) and 104 to 175 (NNNN…INNN). The segment at 56-175 (NKSNGNNSIN…NNNNNNINNN (120 aa)) is disordered. 240–246 (PGCGKTT) lines the ATP pocket. 3 disordered regions span residues 621 to 647 (KDRQ…PQQQ), 714 to 737 (INNK…LNPT), and 833 to 876 (ETKA…SLDF). 2 stretches are compositionally biased toward low complexity: residues 626–647 (SQDQ…PQQQ) and 714–731 (INNK…VNNS). A compositionally biased stretch (polar residues) spans 835–849 (KAISSTDTKESVSIN). Over residues 850-863 (DSDKDLTTTHKNEQ) the composition is skewed to basic and acidic residues.

The protein belongs to the AAA ATPase family. RarA/MGS1/WRNIP1 subfamily.

The protein localises to the nucleus. The catalysed reaction is ATP + H2O = ADP + phosphate + H(+). Its function is as follows. Functions as a modulator for initiation or reinitiation events during DNA polymerase delta-mediated DNA synthesis. Has an intrinsic ATPase activity that functions as a sensor of DNA damage or of arrested replication forks and regulates the extent of DNA synthesis. In Dictyostelium discoideum (Social amoeba), this protein is ATPase WRNIP1.